Reading from the N-terminus, the 702-residue chain is Polyribonucleotide nucleotidyltransferase (702 aa).

Residues aspartate 487 and aspartate 493 each coordinate Mg(2+). One can recognise a KH domain in the interval 554-613 (PRLLTIKIHPDKIREVIGKGGSTIQAITKETGTQIDIQDDGTIVIASVNAIAAQAAKARI). In terms of domain architecture, S1 motif spans 623 to 691 (GRIYEGKVAK…KQGRIRLSMK (69 aa)).

The protein belongs to the polyribonucleotide nucleotidyltransferase family. In terms of assembly, component of the RNA degradosome, which is a multiprotein complex involved in RNA processing and mRNA degradation. Requires Mg(2+) as cofactor.

The protein localises to the cytoplasm. The catalysed reaction is RNA(n+1) + phosphate = RNA(n) + a ribonucleoside 5'-diphosphate. Its function is as follows. Involved in mRNA degradation. Catalyzes the phosphorolysis of single-stranded polyribonucleotides processively in the 3'- to 5'-direction. The chain is Polyribonucleotide nucleotidyltransferase from Stenotrophomonas maltophilia (strain R551-3).